The chain runs to 559 residues: Extracellular matrix protein 1 (559 aa).

A signal peptide spans 1–19; it reads MGTVSRAALILACLALASA. 2 consecutive repeat copies span residues 170 to 298 and 302 to 424. A 2 X approximate repeats region spans residues 170–424; that stretch reads HCQQGRRGVW…FAHLAPYPNY (255 aa). N-linked (GlcNAc...) asparagine glycosylation occurs at Asn-373. Asn-463 and Asn-535 each carry an N-linked (GlcNAc...) (high mannose) asparagine glycan. Residues 535-559 form a disordered region; it reads NATGLGEQGPTRGTDANPAPGSKEE. Ser-556 is modified (phosphoserine).

Interacts (via C-terminus) with HSPG2 (via C-terminus). Interacts with EFEMP1/FBLN3 and LAMB3. Interacts with MMP9. Expressed in the surrounding connective tissues of developing long bones, but not in the cartilage. The long isoform is expressed in a number of tissues including liver, heart and lungs. The short isoform is expressed in skin and cartilage-containing tissues such as tail and front paw. No expression is found in brain.

It localises to the secreted. Its subcellular location is the extracellular space. The protein localises to the extracellular matrix. Involved in endochondral bone formation as negative regulator of bone mineralization. Stimulates the proliferation of endothelial cells and promotes angiogenesis. Inhibits MMP9 proteolytic activity. This Mus musculus (Mouse) protein is Extracellular matrix protein 1 (Ecm1).